The sequence spans 436 residues: GTPase Der (436 aa).

2 consecutive EngA-type G domains span residues 4–167 and 175–351; these read PTVA…PVEE and IRFS…ESQN. GTP is bound by residues 10 to 17, 57 to 61, 119 to 122, 181 to 188, 229 to 233, and 294 to 297; these read GRPNVGKS, DTGGI, NKVD, DTAGM, and NKWD. The KH-like domain occupies 352-436; that stretch reads KRIPSAVLND…PIHLIARKRK (85 aa).

This sequence belongs to the TRAFAC class TrmE-Era-EngA-EngB-Septin-like GTPase superfamily. EngA (Der) GTPase family. As to quaternary structure, associates with the 50S ribosomal subunit.

GTPase that plays an essential role in the late steps of ribosome biogenesis. The sequence is that of GTPase Der from Streptococcus pyogenes serotype M5 (strain Manfredo).